The primary structure comprises 127 residues: Aspartate 1-decarboxylase (127 aa).

Catalysis depends on Ser25, which acts as the Schiff-base intermediate with substrate; via pyruvic acid. Ser25 carries the post-translational modification Pyruvic acid (Ser). Thr57 is a binding site for substrate. The active-site Proton donor is the Tyr58. Position 73-75 (73-75 (GAA)) interacts with substrate.

The protein belongs to the PanD family. In terms of assembly, heterooctamer of four alpha and four beta subunits. Pyruvate serves as cofactor. In terms of processing, is synthesized initially as an inactive proenzyme, which is activated by self-cleavage at a specific serine bond to produce a beta-subunit with a hydroxyl group at its C-terminus and an alpha-subunit with a pyruvoyl group at its N-terminus.

It localises to the cytoplasm. It catalyses the reaction L-aspartate + H(+) = beta-alanine + CO2. Its pathway is cofactor biosynthesis; (R)-pantothenate biosynthesis; beta-alanine from L-aspartate: step 1/1. Catalyzes the pyruvoyl-dependent decarboxylation of aspartate to produce beta-alanine. The protein is Aspartate 1-decarboxylase of Listeria monocytogenes serovar 1/2a (strain ATCC BAA-679 / EGD-e).